A 130-amino-acid polypeptide reads, in one-letter code: uncharacterized protein (130 aa).

Disordered stretches follow at residues 1 to 47 (MTFY…QSNT) and 78 to 130 (QTLE…SESS). Over residues 13-33 (QWKQLQTQQNKKNSPRPVTSS) the composition is skewed to polar residues. The span at 86 to 110 (PSKHKRKRTKYRRTKKSKHHSRKKT) shows a compositional bias: basic residues. A compositionally biased stretch (basic and acidic residues) spans 117–130 (SERDSTTGRESESS).

This is an uncharacterized protein from Torque teno mini virus 1 (isolate TLMV-CBD279).